We begin with the raw amino-acid sequence, 141 residues long: uncharacterized protein (141 aa).

The interval 1–101 is disordered; it reads FRGRAPRPLV…PDPGRSRRAT (101 aa). Residues 27–70 show a composition bias toward basic and acidic residues; that stretch reads QVRDCGREGDLRAGKAADRRLPRARETCSRFGEGVRQKDVHKGP.

This is an uncharacterized protein from Dhori virus (strain Indian/1313/61) (Dho).